The following is a 303-amino-acid chain: Paired immunoglobulin-like type 2 receptor alpha (303 aa).

Residues methionine 1–leucine 19 form the signal peptide. At glutamine 20–alanine 197 the chain is on the extracellular side. In terms of domain architecture, Ig-like V-type spans leucine 32 to threonine 150. N-linked (GlcNAc...) asparagine glycosylation occurs at asparagine 100. A helical membrane pass occupies residues valine 198–leucine 218. Residues arginine 219 to alanine 303 lie on the Cytoplasmic side of the membrane. The segment at glutamine 226 to threonine 296 is disordered. Short sequence motifs (ITIM motif) lie at residues isoleucine 267–leucine 272 and threonine 296–leucine 301.

As to quaternary structure, monomer. Interacts with PTPN6/SHP-1 and PTPN11/SHP-2 upon tyrosine phosphorylation. (Microbial infection) Interacts with herpes simplex virus 1 glycoprotein B. Post-translationally, according to PubMed:10660620, N- and O-glycosylated. According to PubMed:10903717, only N-glycosylated. In terms of processing, phosphorylated on tyrosine residues. In terms of tissue distribution, predominantly detected in hemopoietic tissues and is expressed by monocytes, macrophages, and granulocytes, but not by lymphocytes. Also strongly expressed by dendritic cells (DC); preferentially by CD14+/CD1a- DC derived from CD34+ progenitors. Also expressed by CD11c+ blood and tonsil DC, but not by CD11c- DC precursors.

Its subcellular location is the cell membrane. It localises to the secreted. Paired receptors consist of highly related activating and inhibitory receptors and are widely involved in the regulation of the immune system. PILRA is thought to act as a cellular signaling inhibitory receptor by recruiting cytoplasmic phosphatases like PTPN6/SHP-1 and PTPN11/SHP-2 via their SH2 domains that block signal transduction through dephosphorylation of signaling molecules. Receptor for PIANP. Functionally, (Microbial infection) Acts as an entry co-receptor for herpes simplex virus 1. The polypeptide is Paired immunoglobulin-like type 2 receptor alpha (PILRA) (Homo sapiens (Human)).